The following is a 156-amino-acid chain: Small ribosomal subunit protein uS7 (156 aa).

The protein belongs to the universal ribosomal protein uS7 family. Part of the 30S ribosomal subunit. Contacts proteins S9 and S11.

Its function is as follows. One of the primary rRNA binding proteins, it binds directly to 16S rRNA where it nucleates assembly of the head domain of the 30S subunit. Is located at the subunit interface close to the decoding center, probably blocks exit of the E-site tRNA. In Shewanella halifaxensis (strain HAW-EB4), this protein is Small ribosomal subunit protein uS7.